A 286-amino-acid polypeptide reads, in one-letter code: Bifunctional protein FolD (286 aa).

Residues 166–168 (GRS), Ser-191, and Ile-232 each bind NADP(+).

This sequence belongs to the tetrahydrofolate dehydrogenase/cyclohydrolase family. In terms of assembly, homodimer.

It catalyses the reaction (6R)-5,10-methylene-5,6,7,8-tetrahydrofolate + NADP(+) = (6R)-5,10-methenyltetrahydrofolate + NADPH. The catalysed reaction is (6R)-5,10-methenyltetrahydrofolate + H2O = (6R)-10-formyltetrahydrofolate + H(+). It functions in the pathway one-carbon metabolism; tetrahydrofolate interconversion. Its function is as follows. Catalyzes the oxidation of 5,10-methylenetetrahydrofolate to 5,10-methenyltetrahydrofolate and then the hydrolysis of 5,10-methenyltetrahydrofolate to 10-formyltetrahydrofolate. This is Bifunctional protein FolD from Herpetosiphon aurantiacus (strain ATCC 23779 / DSM 785 / 114-95).